A 349-amino-acid polypeptide reads, in one-letter code: AdoMet-dependent heme synthase (349 aa).

The Radical SAM core domain maps to 5–214 (TNAPRLIAWE…LHWFYEMQKE (210 aa)). Residues cysteine 19, cysteine 23, and cysteine 26 each coordinate [4Fe-4S] cluster.

It belongs to the radical SAM superfamily. [4Fe-4S] cluster serves as cofactor.

The catalysed reaction is Fe-coproporphyrin III + 2 S-adenosyl-L-methionine = heme b + 2 5'-deoxyadenosine + 2 L-methionine + 2 CO2. Its pathway is porphyrin-containing compound metabolism; protoheme biosynthesis. Its function is as follows. Involved in siroheme-dependent heme b biosynthesis. Catalyzes the conversion of Fe-coproporphyrin III into heme by the oxidative decarboxylation of two propionate side chains. The protein is AdoMet-dependent heme synthase of Methanosarcina barkeri (strain Fusaro / DSM 804).